A 354-amino-acid polypeptide reads, in one-letter code: Histidinol-phosphate aminotransferase (354 aa).

Lysine 210 carries the post-translational modification N6-(pyridoxal phosphate)lysine.

This sequence belongs to the class-II pyridoxal-phosphate-dependent aminotransferase family. Histidinol-phosphate aminotransferase subfamily. Homodimer. Requires pyridoxal 5'-phosphate as cofactor.

The catalysed reaction is L-histidinol phosphate + 2-oxoglutarate = 3-(imidazol-4-yl)-2-oxopropyl phosphate + L-glutamate. The protein operates within amino-acid biosynthesis; L-histidine biosynthesis; L-histidine from 5-phospho-alpha-D-ribose 1-diphosphate: step 7/9. The chain is Histidinol-phosphate aminotransferase from Clostridium botulinum (strain ATCC 19397 / Type A).